Here is a 122-residue protein sequence, read N- to C-terminus: MIQPKTHLNVADNSGARELMCIRIIGASNHRYAHIGDVIVAVIKEAVPNMPLERSEVIRAVIVRTCKELKRDNGMIIRYDDNAAVVIDQEGNPRGTRVFGAIARELRQLNFTKIVSLAPEVL.

This sequence belongs to the universal ribosomal protein uL14 family. As to quaternary structure, part of the 50S ribosomal subunit.

The protein localises to the plastid. It localises to the chloroplast. Functionally, binds to 23S rRNA. The polypeptide is Large ribosomal subunit protein uL14c (Chloranthus spicatus (Chulantree)).